Reading from the N-terminus, the 631-residue chain is Dolichyl-diphosphooligosaccharide--protein glycosyltransferase subunit 2 (631 aa).

The signal sequence occupies residues 1 to 22 (MAPPGSSAVFLLALTITASVQA). Residues 23–540 (LTPTHYLTKQ…REPEKRPPTV (518 aa)) lie on the Lumenal side of the membrane. The N-linked (GlcNAc...) asparagine glycan is linked to N106. A Glycyl lysine isopeptide (Lys-Gly) (interchain with G-Cter in ubiquitin) cross-link involves residue K154. Residues 541–561 (VSNTFTALILSPLLLLFALWI) traverse the membrane as a helical segment. Over 562-571 (RIGANVSNFT) the chain is Cytoplasmic. Residues 572–592 (FAPSTVIFHLGHAAMLGLMYI) traverse the membrane as a helical segment. The Lumenal portion of the chain corresponds to 593 to 596 (YWTQ). A helical transmembrane segment spans residues 597-617 (LNMFQTLKYLAVLGTVTFLAG). Topologically, residues 618-631 (NRMLAQHAVKRTAH) are cytoplasmic.

This sequence belongs to the SWP1 family. In terms of assembly, component of the oligosaccharyltransferase (OST) complex. OST exists in two different complex forms which contain common core subunits RPN1, RPN2, OST48, OST4, DAD1 and TMEM258, either STT3A or STT3B as catalytic subunits, and form-specific accessory subunits. STT3A complex assembly occurs through the formation of 3 subcomplexes. Subcomplex 1 contains RPN1 and TMEM258, subcomplex 2 contains the STT3A-specific subunits STT3A, DC2/OSTC, and KCP2 as well as the core subunit OST4, and subcomplex 3 contains RPN2, DAD1, and OST48. The STT3A complex can form stable complexes with the Sec61 complex or with both the Sec61 and TRAP complexes. Interacts with DDI2. Interacts with TMEM35A/NACHO.

The protein resides in the endoplasmic reticulum. It localises to the endoplasmic reticulum membrane. Its pathway is protein modification; protein glycosylation. Its function is as follows. Subunit of the oligosaccharyl transferase (OST) complex that catalyzes the initial transfer of a defined glycan (Glc(3)Man(9)GlcNAc(2) in eukaryotes) from the lipid carrier dolichol-pyrophosphate to an asparagine residue within an Asn-X-Ser/Thr consensus motif in nascent polypeptide chains, the first step in protein N-glycosylation. N-glycosylation occurs cotranslationally and the complex associates with the Sec61 complex at the channel-forming translocon complex that mediates protein translocation across the endoplasmic reticulum (ER). All subunits are required for a maximal enzyme activity. In Mus musculus (Mouse), this protein is Dolichyl-diphosphooligosaccharide--protein glycosyltransferase subunit 2.